The chain runs to 307 residues: Major immediate early protein (307 aa).

An RING-type zinc finger spans residues 39–92 (CAVCLETYCVQSNNIIDFLMPSECTHLFCYKCVLNMYKNAMNVPRAAVSCPMCN).

This chain is Major immediate early protein (PE38), found in Orgyia pseudotsugata multicapsid polyhedrosis virus (OpMNPV).